The sequence spans 391 residues: Carbamoyl phosphate synthase small chain (391 aa).

The CPSase stretch occupies residues 1 to 189; sequence MIKSALLVLE…DLPAAKQPED (189 aa). Residues Ser-47, Gly-241, and Gly-243 each coordinate L-glutamine. Positions 193–380 constitute a Glutamine amidotransferase type-1 domain; the sequence is HVVAYDYGVK…IELIEAYRAS (188 aa). Residue Cys-269 is the Nucleophile of the active site. Residues Leu-270, Gln-273, Asn-311, Gly-313, and Phe-314 each contribute to the L-glutamine site. Active-site residues include His-353 and Glu-355.

Belongs to the CarA family. As to quaternary structure, composed of two chains; the small (or glutamine) chain promotes the hydrolysis of glutamine to ammonia, which is used by the large (or ammonia) chain to synthesize carbamoyl phosphate. Tetramer of heterodimers (alpha,beta)4.

The catalysed reaction is hydrogencarbonate + L-glutamine + 2 ATP + H2O = carbamoyl phosphate + L-glutamate + 2 ADP + phosphate + 2 H(+). The enzyme catalyses L-glutamine + H2O = L-glutamate + NH4(+). Its pathway is amino-acid biosynthesis; L-arginine biosynthesis; carbamoyl phosphate from bicarbonate: step 1/1. It functions in the pathway pyrimidine metabolism; UMP biosynthesis via de novo pathway; (S)-dihydroorotate from bicarbonate: step 1/3. In terms of biological role, small subunit of the glutamine-dependent carbamoyl phosphate synthetase (CPSase). CPSase catalyzes the formation of carbamoyl phosphate from the ammonia moiety of glutamine, carbonate, and phosphate donated by ATP, constituting the first step of 2 biosynthetic pathways, one leading to arginine and/or urea and the other to pyrimidine nucleotides. The small subunit (glutamine amidotransferase) binds and cleaves glutamine to supply the large subunit with the substrate ammonia. In Yersinia pestis, this protein is Carbamoyl phosphate synthase small chain.